A 399-amino-acid polypeptide reads, in one-letter code: S-adenosylmethionine synthase (399 aa).

Histidine 19 serves as a coordination point for ATP. Residue aspartate 21 participates in Mg(2+) binding. Glutamate 47 contacts K(+). The L-methionine site is built by glutamate 60 and glutamine 103. Residues 103-113 form a flexible loop region; it reads QSPDIAQGVNQ. ATP contacts are provided by residues 179–181, 246–247, aspartate 255, 261–262, alanine 278, and lysine 282; these read DGK, RF, and RK. Aspartate 255 is a binding site for L-methionine. Residue lysine 286 coordinates L-methionine.

Belongs to the AdoMet synthase family. Homotetramer; dimer of dimers. The cofactor is Mg(2+). K(+) is required as a cofactor.

It localises to the cytoplasm. It carries out the reaction L-methionine + ATP + H2O = S-adenosyl-L-methionine + phosphate + diphosphate. The protein operates within amino-acid biosynthesis; S-adenosyl-L-methionine biosynthesis; S-adenosyl-L-methionine from L-methionine: step 1/1. Its function is as follows. Catalyzes the formation of S-adenosylmethionine (AdoMet) from methionine and ATP. The overall synthetic reaction is composed of two sequential steps, AdoMet formation and the subsequent tripolyphosphate hydrolysis which occurs prior to release of AdoMet from the enzyme. The polypeptide is S-adenosylmethionine synthase (Halalkalibacterium halodurans (strain ATCC BAA-125 / DSM 18197 / FERM 7344 / JCM 9153 / C-125) (Bacillus halodurans)).